Here is a 549-residue protein sequence, read N- to C-terminus: Cytoplasmic trehalase (549 aa).

Substrate is bound by residues Arg168, 175 to 176 (WD), Asn212, 221 to 223 (RSQ), 292 to 294 (RDE), and Gly324. Catalysis depends on proton donor/acceptor residues Asp326 and Glu509. Position 525 (Glu525) interacts with substrate.

The protein belongs to the glycosyl hydrolase 37 family. Monomer.

Its subcellular location is the cytoplasm. The enzyme catalyses alpha,alpha-trehalose + H2O = alpha-D-glucose + beta-D-glucose. It functions in the pathway glycan degradation; trehalose degradation; D-glucose from alpha,alpha-trehalose: step 1/1. Its function is as follows. Hydrolyzes trehalose to glucose. Could be involved, in cells returning to low osmolarity conditions, in the utilization of the accumulated cytoplasmic trehalose, which was synthesized in response to high osmolarity. In Escherichia coli O157:H7, this protein is Cytoplasmic trehalase.